We begin with the raw amino-acid sequence, 745 residues long: Photosystem I P700 chlorophyll a apoprotein A2 (745 aa).

A run of 8 helical transmembrane segments spans residues 49–72 (LFAT…FHIA), 138–161 (LYAG…LHLQ), 178–202 (LNHH…HVAI), 276–294 (MAHH…GHMY), 338–361 (LHFQ…QHMY), 377–403 (AALY…IFLV), 425–447 (AIIS…LYVH), and 528–546 (FLVH…LILV). 2 residues coordinate [4Fe-4S] cluster: C570 and C579. Helical transmembrane passes span 586-607 (AFYL…YWHW) and 654-676 (LAVW…MFLI). The chlorophyll a site is built by H665, M673, and Y681. W682 contributes to the phylloquinone binding site. Residues 718-738 (LVGLAHFTVGYVLTYAAFVIA) form a helical membrane-spanning segment.

This sequence belongs to the PsaA/PsaB family. In terms of assembly, the PsaA/B heterodimer binds the P700 chlorophyll special pair and subsequent electron acceptors. PSI consists of a core antenna complex that captures photons, and an electron transfer chain that converts photonic excitation into a charge separation. The cyanobacterial PSI reaction center is composed of one copy each of PsaA,B,C,D,E,F,I,J,K,L,M and X, and forms trimeric complexes. It depends on PSI electron transfer chain: 5 chlorophyll a, 1 chlorophyll a', 2 phylloquinones and 3 4Fe-4S clusters. PSI core antenna: 90 chlorophyll a, 22 carotenoids, 3 phospholipids and 1 galactolipid. P700 is a chlorophyll a/chlorophyll a' dimer, A0 is one or more chlorophyll a, A1 is one or both phylloquinones and FX is a shared 4Fe-4S iron-sulfur center. as a cofactor.

It localises to the cellular thylakoid membrane. The catalysed reaction is reduced [plastocyanin] + hnu + oxidized [2Fe-2S]-[ferredoxin] = oxidized [plastocyanin] + reduced [2Fe-2S]-[ferredoxin]. In terms of biological role, psaA and PsaB bind P700, the primary electron donor of photosystem I (PSI), as well as the electron acceptors A0, A1 and FX. PSI is a plastocyanin/cytochrome c6-ferredoxin oxidoreductase, converting photonic excitation into a charge separation, which transfers an electron from the donor P700 chlorophyll pair to the spectroscopically characterized acceptors A0, A1, FX, FA and FB in turn. Oxidized P700 is reduced on the lumenal side of the thylakoid membrane by plastocyanin or cytochrome c6. This is Photosystem I P700 chlorophyll a apoprotein A2 from Synechococcus sp. (strain JA-3-3Ab) (Cyanobacteria bacterium Yellowstone A-Prime).